The following is a 132-amino-acid chain: Large ribosomal subunit protein bL19 (132 aa).

It belongs to the bacterial ribosomal protein bL19 family.

Functionally, this protein is located at the 30S-50S ribosomal subunit interface and may play a role in the structure and function of the aminoacyl-tRNA binding site. The polypeptide is Large ribosomal subunit protein bL19 (Persephonella marina (strain DSM 14350 / EX-H1)).